A 445-amino-acid chain; its full sequence is Lipid A 1-phosphatase (445 aa).

The first 22 residues, 1–22, serve as a signal peptide directing secretion; sequence MNRESFLLLLVLLFALPLHLQA.

It localises to the periplasm. It functions in the pathway bacterial outer membrane biogenesis; LPS lipid A biosynthesis. In terms of biological role, removes the 1-phosphate group from lipid A species. Absence of phosphate groups in lipid A renders the bacteria resistant to host-derived cationic antimicrobial peptides (CAMP) and allowing it to camouflage itself from the host innate immune response. This chain is Lipid A 1-phosphatase, found in Porphyromonas gingivalis (strain ATCC 33277 / DSM 20709 / CIP 103683 / JCM 12257 / NCTC 11834 / 2561).